The sequence spans 239 residues: MQKLELLYEGKAKRIYRTESADMVWVEYKDSATAFNGEKKETITGKGRLNNEITTLLFRKLQEVGIKTHFVEKLSETEQLVKKVSIIPLEVVTRNVIAGSLSKRLGMEEGTVLAEPIVEFYFKDDDLGDPLVTEDHIRVLNVASPEQVSVLRDMALQINQVLIDHFASCRVRLVDFKLEFGVTEEGEIILADEISPDTCRLWDETSNEKFDKDVFRRDLGNLTDAYEEILKRLGGISHV.

It belongs to the SAICAR synthetase family.

The enzyme catalyses 5-amino-1-(5-phospho-D-ribosyl)imidazole-4-carboxylate + L-aspartate + ATP = (2S)-2-[5-amino-1-(5-phospho-beta-D-ribosyl)imidazole-4-carboxamido]succinate + ADP + phosphate + 2 H(+). It functions in the pathway purine metabolism; IMP biosynthesis via de novo pathway; 5-amino-1-(5-phospho-D-ribosyl)imidazole-4-carboxamide from 5-amino-1-(5-phospho-D-ribosyl)imidazole-4-carboxylate: step 1/2. This Bacillus cereus (strain B4264) protein is Phosphoribosylaminoimidazole-succinocarboxamide synthase.